Here is a 204-residue protein sequence, read N- to C-terminus: Large ribosomal subunit protein bL25 (204 aa).

The protein belongs to the bacterial ribosomal protein bL25 family. CTC subfamily. As to quaternary structure, part of the 50S ribosomal subunit; part of the 5S rRNA/L5/L18/L25 subcomplex. Contacts the 5S rRNA. Binds to the 5S rRNA independently of L5 and L18.

Its function is as follows. This is one of the proteins that binds to the 5S RNA in the ribosome where it forms part of the central protuberance. The sequence is that of Large ribosomal subunit protein bL25 from Bordetella bronchiseptica (strain ATCC BAA-588 / NCTC 13252 / RB50) (Alcaligenes bronchisepticus).